The following is a 427-amino-acid chain: Serine--tRNA ligase (427 aa).

L-serine is bound at residue 230-232 (TSE). ATP-binding positions include 260-262 (RRE) and Val-276. An L-serine-binding site is contributed by Glu-283. 347–350 (ELTS) is an ATP binding site. Thr-387 is an L-serine binding site.

It belongs to the class-II aminoacyl-tRNA synthetase family. Type-1 seryl-tRNA synthetase subfamily. As to quaternary structure, homodimer. The tRNA molecule binds across the dimer.

Its subcellular location is the cytoplasm. It catalyses the reaction tRNA(Ser) + L-serine + ATP = L-seryl-tRNA(Ser) + AMP + diphosphate + H(+). The enzyme catalyses tRNA(Sec) + L-serine + ATP = L-seryl-tRNA(Sec) + AMP + diphosphate + H(+). Its pathway is aminoacyl-tRNA biosynthesis; selenocysteinyl-tRNA(Sec) biosynthesis; L-seryl-tRNA(Sec) from L-serine and tRNA(Sec): step 1/1. In terms of biological role, catalyzes the attachment of serine to tRNA(Ser). Is also able to aminoacylate tRNA(Sec) with serine, to form the misacylated tRNA L-seryl-tRNA(Sec), which will be further converted into selenocysteinyl-tRNA(Sec). This is Serine--tRNA ligase from Micrococcus luteus (strain ATCC 4698 / DSM 20030 / JCM 1464 / CCM 169 / CCUG 5858 / IAM 1056 / NBRC 3333 / NCIMB 9278 / NCTC 2665 / VKM Ac-2230) (Micrococcus lysodeikticus).